The chain runs to 274 residues: Cyclase-like protein 1 (274 aa).

A signal peptide spans 1 to 18 (MAASRLALLLLVLAVAAA).

It belongs to the Cyclase 1 superfamily. Highly expressed in leaf sheaths. Expressed in leaf collars.

Its subcellular location is the secreted. It is found in the extracellular space. The protein localises to the extracellular matrix. May be involved in response to stresses. In Oryza sativa subsp. japonica (Rice), this protein is Cyclase-like protein 1.